Here is a 233-residue protein sequence, read N- to C-terminus: tRNA (guanine-N(7)-)-methyltransferase (233 aa).

Residues 1-21 (MTEESHPLRGAGNFFGRRHGK) are disordered. 4 residues coordinate S-adenosyl-L-methionine: Glu-64, Glu-89, Asp-116, and Asp-138. Asp-138 is a catalytic residue. Residues Lys-142, Asp-174, and 212 to 215 (TRYE) each bind substrate.

This sequence belongs to the class I-like SAM-binding methyltransferase superfamily. TrmB family.

The catalysed reaction is guanosine(46) in tRNA + S-adenosyl-L-methionine = N(7)-methylguanosine(46) in tRNA + S-adenosyl-L-homocysteine. It functions in the pathway tRNA modification; N(7)-methylguanine-tRNA biosynthesis. Its function is as follows. Catalyzes the formation of N(7)-methylguanine at position 46 (m7G46) in tRNA. The polypeptide is tRNA (guanine-N(7)-)-methyltransferase (Brucella anthropi (strain ATCC 49188 / DSM 6882 / CCUG 24695 / JCM 21032 / LMG 3331 / NBRC 15819 / NCTC 12168 / Alc 37) (Ochrobactrum anthropi)).